The primary structure comprises 532 residues: CTP synthase (532 aa).

Residues methionine 1 to leucine 267 are amidoligase domain. A CTP-binding site is contributed by serine 13. Serine 13 is a binding site for UTP. Glycine 14 to isoleucine 19 provides a ligand contact to ATP. Tyrosine 54 is an L-glutamine binding site. Aspartate 71 contacts ATP. Mg(2+)-binding residues include aspartate 71 and glutamate 141. CTP contacts are provided by residues aspartate 148–glutamate 150, lysine 188–glutamine 193, and lysine 224. UTP-binding positions include lysine 188–glutamine 193 and lysine 224. In terms of domain architecture, Glutamine amidotransferase type-1 spans glutamate 292 to lysine 532. Residue glycine 354 participates in L-glutamine binding. Cysteine 381 (nucleophile; for glutamine hydrolysis) is an active-site residue. L-glutamine-binding positions include leucine 382–glutamine 385, glutamate 405, and arginine 461. Catalysis depends on residues histidine 506 and glutamate 508.

It belongs to the CTP synthase family. In terms of assembly, homotetramer.

It catalyses the reaction UTP + L-glutamine + ATP + H2O = CTP + L-glutamate + ADP + phosphate + 2 H(+). It carries out the reaction L-glutamine + H2O = L-glutamate + NH4(+). The catalysed reaction is UTP + NH4(+) + ATP = CTP + ADP + phosphate + 2 H(+). It functions in the pathway pyrimidine metabolism; CTP biosynthesis via de novo pathway; CTP from UDP: step 2/2. With respect to regulation, allosterically activated by GTP, when glutamine is the substrate; GTP has no effect on the reaction when ammonia is the substrate. The allosteric effector GTP functions by stabilizing the protein conformation that binds the tetrahedral intermediate(s) formed during glutamine hydrolysis. Inhibited by the product CTP, via allosteric rather than competitive inhibition. In terms of biological role, catalyzes the ATP-dependent amination of UTP to CTP with either L-glutamine or ammonia as the source of nitrogen. Regulates intracellular CTP levels through interactions with the four ribonucleotide triphosphates. The protein is CTP synthase of Mycoplasma capricolum subsp. capricolum (strain California kid / ATCC 27343 / NCTC 10154).